The sequence spans 226 residues: Protein FMP52-1, mitochondrial (226 aa).

Residues 1–43 (MSAFVLGSTGLVGLQILKVLDSSTAFKKVSTVSRRLPSVTSGK) constitute a mitochondrion transit peptide.

This sequence belongs to the FMP52 family.

Its subcellular location is the mitochondrion outer membrane. The protein is Protein FMP52-1, mitochondrial (FMP521) of Scheffersomyces stipitis (strain ATCC 58785 / CBS 6054 / NBRC 10063 / NRRL Y-11545) (Yeast).